The following is a 62-amino-acid chain: Potassium channel toxin alpha-KTx Tx790 (62 aa).

The N-terminal stretch at 1-18 is a signal peptide; sequence MQKLFIVLVLFCILRLDA. 3 disulfides stabilise this stretch: C28-C46, C33-C59, and C37-C61.

It belongs to the short scorpion toxin superfamily. Potassium channel inhibitor family. Alpha-KTx 23 subfamily. As to expression, expressed by the venom gland.

The protein resides in the secreted. May block potassium channels. This is Potassium channel toxin alpha-KTx Tx790 from Buthus israelis (Israeli scorpion).